A 447-amino-acid chain; its full sequence is Signal recognition particle 54 kDa protein (447 aa).

Residues 105-112, 187-191, and 247-250 contribute to the GTP site; these read GVQGSGKT, DTAGR, and TKMD.

The protein belongs to the GTP-binding SRP family. SRP54 subfamily. In terms of assembly, part of the signal recognition particle protein translocation system, which is composed of SRP and FtsY. Archaeal SRP consists of a 7S RNA molecule of 300 nucleotides and two protein subunits: SRP54 and SRP19.

Its subcellular location is the cytoplasm. It carries out the reaction GTP + H2O = GDP + phosphate + H(+). In terms of biological role, involved in targeting and insertion of nascent membrane proteins into the cytoplasmic membrane. Binds to the hydrophobic signal sequence of the ribosome-nascent chain (RNC) as it emerges from the ribosomes. The SRP-RNC complex is then targeted to the cytoplasmic membrane where it interacts with the SRP receptor FtsY. The protein is Signal recognition particle 54 kDa protein of Hyperthermus butylicus (strain DSM 5456 / JCM 9403 / PLM1-5).